Reading from the N-terminus, the 282-residue chain is Aldo-keto reductase BQ2027_MB2996 (282 aa).

Catalysis depends on Tyr57, which acts as the Proton donor. Residues Leu197, Val235, Arg237, Ser238, Ala239, Arg243, Ser246, Asn247, and Arg273 each coordinate NADPH.

Belongs to the aldo/keto reductase family.

The polypeptide is Aldo-keto reductase BQ2027_MB2996 (Mycobacterium bovis (strain ATCC BAA-935 / AF2122/97)).